A 556-amino-acid polypeptide reads, in one-letter code: Urocanate hydratase (556 aa).

NAD(+) contacts are provided by residues 52 to 53 (GG), Q130, 176 to 178 (GMG), E196, R201, 242 to 243 (NA), 263 to 267 (QTSAH), 273 to 274 (YL), and Y322. The active site involves C410. G492 is an NAD(+) binding site.

This sequence belongs to the urocanase family. The cofactor is NAD(+).

The protein localises to the cytoplasm. The enzyme catalyses 4-imidazolone-5-propanoate = trans-urocanate + H2O. Its pathway is amino-acid degradation; L-histidine degradation into L-glutamate; N-formimidoyl-L-glutamate from L-histidine: step 2/3. Functionally, catalyzes the conversion of urocanate to 4-imidazolone-5-propionate. The chain is Urocanate hydratase from Bradyrhizobium diazoefficiens (strain JCM 10833 / BCRC 13528 / IAM 13628 / NBRC 14792 / USDA 110).